We begin with the raw amino-acid sequence, 163 residues long: Adenosine 5'-monophosphoramidase HINT2 (163 aa).

The transit peptide at 1–17 (MAAAVLLAVGLRAARRT) directs the protein to the mitochondrion. Lysine 45 carries the N6-succinyllysine modification. The HIT domain maps to 55–163 (IFSRILDRSL…GGRQLQWPPG (109 aa)). The AMP site is built by serine 63 and aspartate 80. Lysine 119 carries the post-translational modification N6-acetyllysine. Lysine 128 bears the N6-acetyllysine; alternate mark. An N6-succinyllysine; alternate modification is found at lysine 128. Asparagine 136 is a binding site for AMP. Lysine 139 is modified (N6-acetyllysine). Residues 142–145 (AQSV) and 149–151 (HIH) each bind AMP. Residues 147 to 151 (HLHIH) carry the Histidine triad motif motif. Histidine 149 acts as the Tele-AMP-histidine intermediate in catalysis.

This sequence belongs to the HINT family.

It is found in the mitochondrion. The enzyme catalyses adenosine 5'-phosphoramidate + H2O = AMP + NH4(+). Its function is as follows. Exhibits adenosine 5'-monophosphoramidase activity, hydrolyzing purine nucleotide phosphoramidates with a single phosphate group such as adenosine 5'monophosphoramidate (AMP-NH2) to yield AMP and NH2. Hydrolyzes adenosine 5'-O-p-nitrophenylphosphoramidate (AMP-pNA). May be involved in steroid biosynthesis. May play a role in apoptosis. The sequence is that of Adenosine 5'-monophosphoramidase HINT2 from Mus musculus (Mouse).